The sequence spans 173 residues: UPF0102 protein Psyc_1908 (173 aa).

The protein belongs to the UPF0102 family.

The protein is UPF0102 protein Psyc_1908 of Psychrobacter arcticus (strain DSM 17307 / VKM B-2377 / 273-4).